The primary structure comprises 308 residues: Cytochrome b (308 aa).

Helical transmembrane passes span 1–21 (FGSL…LLAM), 45–66 (WLIR…YFHI), 81–101 (WNIG…GYVL), and 146–166 (FFAL…VHLT). The heme b site is built by H51 and H65. Residues H150 and H164 each coordinate heme b. H169 lines the a ubiquinone pocket. The next 3 membrane-spanning stretches (helical) occupy residues 194-214 (TKDI…ALFS), 256-276 (LGGV…PLLH), and 288-308 (LSQI…WVGS).

The protein belongs to the cytochrome b family. In terms of assembly, the cytochrome bc1 complex contains 11 subunits: 3 respiratory subunits (MT-CYB, CYC1 and UQCRFS1), 2 core proteins (UQCRC1 and UQCRC2) and 6 low-molecular weight proteins (UQCRH/QCR6, UQCRB/QCR7, UQCRQ/QCR8, UQCR10/QCR9, UQCR11/QCR10 and a cleavage product of UQCRFS1). This cytochrome bc1 complex then forms a dimer. Heme b serves as cofactor.

The protein resides in the mitochondrion inner membrane. Component of the ubiquinol-cytochrome c reductase complex (complex III or cytochrome b-c1 complex) that is part of the mitochondrial respiratory chain. The b-c1 complex mediates electron transfer from ubiquinol to cytochrome c. Contributes to the generation of a proton gradient across the mitochondrial membrane that is then used for ATP synthesis. This Baeolophus inornatus (Oak titmouse) protein is Cytochrome b (MT-CYB).